The sequence spans 197 residues: dITP/XTP pyrophosphatase (197 aa).

Substrate is bound at residue 7-12 (TGNEQK). The Mg(2+) site is built by Glu44 and Asp73. Residue Asp73 is the Proton acceptor of the active site. Residues Thr74, 156-159 (FGYD), Lys179, and 184-185 (HR) contribute to the substrate site.

The protein belongs to the HAM1 NTPase family. As to quaternary structure, homodimer. Mg(2+) serves as cofactor.

The catalysed reaction is XTP + H2O = XMP + diphosphate + H(+). The enzyme catalyses dITP + H2O = dIMP + diphosphate + H(+). It carries out the reaction ITP + H2O = IMP + diphosphate + H(+). Its function is as follows. Pyrophosphatase that catalyzes the hydrolysis of nucleoside triphosphates to their monophosphate derivatives, with a high preference for the non-canonical purine nucleotides XTP (xanthosine triphosphate), dITP (deoxyinosine triphosphate) and ITP. Seems to function as a house-cleaning enzyme that removes non-canonical purine nucleotides from the nucleotide pool, thus preventing their incorporation into DNA/RNA and avoiding chromosomal lesions. The sequence is that of dITP/XTP pyrophosphatase from Elusimicrobium minutum (strain Pei191).